The primary structure comprises 327 residues: GTP 3',8-cyclase (327 aa).

Residues serine 21–lysine 233 form the Radical SAM core domain. Arginine 30 is a binding site for GTP. Residues cysteine 37 and cysteine 41 each contribute to the [4Fe-4S] cluster site. Position 43 (tyrosine 43) interacts with S-adenosyl-L-methionine. Cysteine 44 lines the [4Fe-4S] cluster pocket. Position 79 (arginine 79) interacts with GTP. Glycine 83 provides a ligand contact to S-adenosyl-L-methionine. A GTP-binding site is contributed by threonine 109. Serine 133 provides a ligand contact to S-adenosyl-L-methionine. Residue lysine 169 participates in GTP binding. Methionine 203 is a binding site for S-adenosyl-L-methionine. The [4Fe-4S] cluster site is built by cysteine 265 and cysteine 268. Arginine 270–arginine 272 serves as a coordination point for GTP. [4Fe-4S] cluster is bound at residue cysteine 282.

It belongs to the radical SAM superfamily. MoaA family. As to quaternary structure, monomer and homodimer. Requires [4Fe-4S] cluster as cofactor.

The enzyme catalyses GTP + AH2 + S-adenosyl-L-methionine = (8S)-3',8-cyclo-7,8-dihydroguanosine 5'-triphosphate + 5'-deoxyadenosine + L-methionine + A + H(+). It participates in cofactor biosynthesis; molybdopterin biosynthesis. Catalyzes the cyclization of GTP to (8S)-3',8-cyclo-7,8-dihydroguanosine 5'-triphosphate. This Synechocystis sp. (strain ATCC 27184 / PCC 6803 / Kazusa) protein is GTP 3',8-cyclase.